Consider the following 171-residue polypeptide: Protein-export protein SecB (171 aa).

The protein belongs to the SecB family. In terms of assembly, homotetramer, a dimer of dimers. One homotetramer interacts with 1 SecA dimer.

It localises to the cytoplasm. In terms of biological role, one of the proteins required for the normal export of preproteins out of the cell cytoplasm. It is a molecular chaperone that binds to a subset of precursor proteins, maintaining them in a translocation-competent state. It also specifically binds to its receptor SecA. This chain is Protein-export protein SecB, found in Granulibacter bethesdensis (strain ATCC BAA-1260 / CGDNIH1).